The chain runs to 168 residues: Endoribonuclease YbeY (168 aa).

Residues His-126, His-130, and His-136 each contribute to the Zn(2+) site.

This sequence belongs to the endoribonuclease YbeY family. Requires Zn(2+) as cofactor.

The protein resides in the cytoplasm. Single strand-specific metallo-endoribonuclease involved in late-stage 70S ribosome quality control and in maturation of the 3' terminus of the 16S rRNA. The sequence is that of Endoribonuclease YbeY from Rhizobium meliloti (strain 1021) (Ensifer meliloti).